A 111-amino-acid polypeptide reads, in one-letter code: Aquaporin-2 (111 aa).

The Cytoplasmic portion of the chain corresponds to S1–R6. Residues A7–L27 form a helical membrane-spanning segment. At N28–T37 the chain is on the extracellular side. Residues V38–L56 form a helical membrane-spanning segment. The Cytoplasmic segment spans residues G57–G61. Positions A62–A71 form an intramembrane region, discontinuously helical. An NPA 1 motif is present at residues N65–A67. At C72–R82 the chain is on the cytoplasmic side. The chain crosses the membrane as a helical span at residues A83 to L104. At T105–G111 the chain is on the extracellular side.

It belongs to the MIP/aquaporin (TC 1.A.8) family. In terms of assembly, homotetramer. Post-translationally, serine phosphorylation is necessary and sufficient for expression at the apical membrane. Endocytosis is not phosphorylation-dependent. N-glycosylated.

The protein resides in the apical cell membrane. It is found in the basolateral cell membrane. The protein localises to the cell membrane. Its subcellular location is the cytoplasmic vesicle membrane. It localises to the golgi apparatus. The protein resides in the trans-Golgi network membrane. The enzyme catalyses H2O(in) = H2O(out). The catalysed reaction is glycerol(in) = glycerol(out). In terms of biological role, forms a water-specific channel that provides the plasma membranes of renal collecting duct with high permeability to water, thereby permitting water to move in the direction of an osmotic gradient. Plays an essential role in renal water homeostasis. Could also be permeable to glycerol. The protein is Aquaporin-2 of Macroscelides proboscideus (Short-eared elephant shrew).